A 346-amino-acid chain; its full sequence is Thioredoxin domain-containing protein R362 (346 aa).

The 134-residue stretch at 212–345 folds into the Thioredoxin domain; the sequence is LTNLSNTEAN…IVKFIDETMS (134 aa).

The protein resides in the virion. This Acanthamoeba polyphaga (Amoeba) protein is Thioredoxin domain-containing protein R362.